The following is a 426-amino-acid chain: Gamma-glutamyl phosphate reductase (426 aa).

The protein belongs to the gamma-glutamyl phosphate reductase family.

The protein resides in the cytoplasm. The catalysed reaction is L-glutamate 5-semialdehyde + phosphate + NADP(+) = L-glutamyl 5-phosphate + NADPH + H(+). Its pathway is amino-acid biosynthesis; L-proline biosynthesis; L-glutamate 5-semialdehyde from L-glutamate: step 2/2. In terms of biological role, catalyzes the NADPH-dependent reduction of L-glutamate 5-phosphate into L-glutamate 5-semialdehyde and phosphate. The product spontaneously undergoes cyclization to form 1-pyrroline-5-carboxylate. The protein is Gamma-glutamyl phosphate reductase of Cupriavidus pinatubonensis (strain JMP 134 / LMG 1197) (Cupriavidus necator (strain JMP 134)).